The following is a 457-amino-acid chain: MSEAKKGHVLFFPYPLQGHINPMIQLAKRLSKKGITSTLIIASKDHREPYTSDDYSITVHTIHDGFFPHEHPHAKFVDLDRFHNSTSRSLTDFISSAKLSDNPPKALIYDPFMPFALDIAKDLDLYVVAYFTQPWLASLVYYHINEGTYDVPVDRHENPTLASFPGFPLLSQDDLPSFACEKGSYPLLHEFVVRQFSNLLQADCILCNTFDQLEPKVVKWMNDQWPVKNIGPVVPSKFLDNRLPEDKDYELENSKTEPDESVLKWLGNRPAKSVVYVAFGTLVALSEKQMKEIAMAISQTGYHFLWSVRESERSKLPSGFIEEAEEKDSGLVAKWVPQLEVLAHESIGCFVSHCGWNSTLEALCLGVPMVGVPQWTDQPTNAKFIEDVWKIGVRVRTDGEGLSSKEEIARCIVEVMEGERGKEIRKNVEKLKVLAREAISEGGSSDKKIDEFVALLT.

Residues Thr281, 336-338 (VPQ), 353-361 (HCGWNSTLE), and 375-378 (WTDQ) each bind UDP-alpha-D-glucose.

It belongs to the UDP-glycosyltransferase family.

This Arabidopsis thaliana (Mouse-ear cress) protein is UDP-glycosyltransferase 74C1 (UGT74C1).